The sequence spans 146 residues: Large ribosomal subunit protein uL13 (146 aa).

Belongs to the universal ribosomal protein uL13 family. In terms of assembly, part of the 50S ribosomal subunit.

Functionally, this protein is one of the early assembly proteins of the 50S ribosomal subunit, although it is not seen to bind rRNA by itself. It is important during the early stages of 50S assembly. The sequence is that of Large ribosomal subunit protein uL13 from Mycoplasma genitalium (strain ATCC 33530 / DSM 19775 / NCTC 10195 / G37) (Mycoplasmoides genitalium).